Consider the following 203-residue polypeptide: Mediator of RNA polymerase II transcription subunit 22 (203 aa).

The stretch at S93–I123 forms a coiled coil. A compositionally biased stretch (polar residues) spans E164–S188. Positions E164–S203 are disordered.

It belongs to the Mediator complex subunit 22 family. In terms of assembly, component of the Mediator complex.

Its subcellular location is the nucleus. Its function is as follows. Component of the Mediator complex, a coactivator involved in the regulated transcription of nearly all RNA polymerase II-dependent genes. Mediator functions as a bridge to convey information from gene-specific regulatory proteins to the basal RNA polymerase II transcription machinery. Mediator is recruited to promoters by direct interactions with regulatory proteins and serves as a scaffold for the assembly of a functional preinitiation complex with RNA polymerase II and the general transcription factors. The polypeptide is Mediator of RNA polymerase II transcription subunit 22 (MED22) (Gallus gallus (Chicken)).